The following is a 335-amino-acid chain: Glyoxylate reductase (335 aa).

Residues Met159–Ile162, Ser181–Ser183, and Thr240–Arg242 each bind NADP(+). Residues Arg242 and Glu271 contribute to the active site. The active-site Proton donor is the His290. Position 290–292 (His290–Ala292) interacts with NADP(+).

This sequence belongs to the D-isomer specific 2-hydroxyacid dehydrogenase family. GyaR subfamily. As to quaternary structure, homodimer.

It is found in the cytoplasm. It carries out the reaction glycolate + NAD(+) = glyoxylate + NADH + H(+). The chain is Glyoxylate reductase from Aeropyrum pernix (strain ATCC 700893 / DSM 11879 / JCM 9820 / NBRC 100138 / K1).